We begin with the raw amino-acid sequence, 228 residues long: Sodium channel regulatory subunit beta-4 (228 aa).

Positions M1–S30 are cleaved as a signal peptide. The Ig-like C2-type domain maps to L31–F148. Residues L31–T161 lie on the Extracellular side of the membrane. N45, N71, N113, and N142 each carry an N-linked (GlcNAc...) asparagine glycan. C53 and C131 are disulfide-bonded. Residues V162–L182 form a helical membrane-spanning segment. The Cytoplasmic segment spans residues L183–V228. The segment at K199 to V228 is disordered. Residues V203 to N213 show a composition bias toward polar residues. The span at K219–V228 shows a compositional bias: basic and acidic residues.

This sequence belongs to the sodium channel auxiliary subunit SCN4B (TC 8.A.17) family. A voltage-gated sodium (Nav) channel consists of an ion-conducting pore-forming alpha subunit functional on its own that is regulated by one or more beta subunits. The beta subunit SCN4B is disulfide-linked to the pore-forming alpha subunit. Interacts with SCN1A; regulatory subunit of SCN1A/Nav1.1. Interacts with SCN2A; regulatory subunit of SCN2A/Nav1.2. Contains an interchain disulfide bond with SCN2A.

Its subcellular location is the cell membrane. Functionally, regulatory subunit of multiple voltage-gated sodium (Nav) channels directly mediating the depolarization of excitable membranes. Navs, also called VGSCs (voltage-gated sodium channels) or VDSCs (voltage-dependent sodium channels), operate by switching between closed and open conformations depending on the voltage difference across the membrane. In the open conformation they allow Na(+) ions to selectively pass through the pore, along their electrochemical gradient. The influx of Na+ ions provokes membrane depolarization, initiating the propagation of electrical signals throughout cells and tissues. The accessory beta subunits participate in localization and functional modulation of the Nav channels. Modulates the activity of SCN1A/Nav1.1. Modulates the activity of SCN2A/Nav1.2. The protein is Sodium channel regulatory subunit beta-4 of Mus musculus (Mouse).